Consider the following 410-residue polypeptide: Putative competence-damage inducible protein (410 aa).

This sequence belongs to the CinA family.

The protein is Putative competence-damage inducible protein of Clostridium kluyveri (strain NBRC 12016).